A 405-amino-acid chain; its full sequence is Glycosylated lysosomal membrane protein A (405 aa).

The signal sequence occupies residues 1–25 (MGCTRGWRLLLLLGLVCVGALQGRG). The Lumenal segment spans residues 26–365 (QEESREVSLQ…YGEPPRDSFS (340 aa)). Residues asparagine 55, asparagine 86, asparagine 125, asparagine 129, asparagine 143, asparagine 153, asparagine 157, asparagine 164, asparagine 169, asparagine 179, asparagine 206, asparagine 222, asparagine 267, asparagine 304, and asparagine 331 are each glycosylated (N-linked (GlcNAc...) asparagine). A helical transmembrane segment spans residues 366-386 (ILVICIMAVALGTPLLLLIVG). Topologically, residues 387–405 (TLVVTALRHKVYSNYEPIN) are cytoplasmic. A Lysosomal targeting motif motif is present at residues 401-405 (YEPIN).

Belongs to the GLMP family. As to quaternary structure, interacts (via lumenal domain) with lysosomal protein MFSD1; the interaction starts while both proteins are still in the endoplasmic reticulum and is required for stabilization of MFSD1 in lysosomes but has no direct effect on its targeting to lysosomes or transporter activity.

It is found in the lysosome membrane. In terms of biological role, required to protect lysosomal transporter MFSD1 from lysosomal proteolysis and for MFSD1 lysosomal localization. The chain is Glycosylated lysosomal membrane protein A (glmp-a) from Xenopus laevis (African clawed frog).